We begin with the raw amino-acid sequence, 372 residues long: Queuine tRNA-ribosyltransferase (372 aa).

Residue aspartate 92 is the Proton acceptor of the active site. Substrate contacts are provided by residues aspartate 92–tyrosine 96, aspartate 146, glutamine 188, and glycine 215. Residues glycine 246–glutamate 252 form an RNA binding region. The active-site Nucleophile is the aspartate 265. Residues threonine 270–arginine 274 form an RNA binding; important for wobble base 34 recognition region. Zn(2+) contacts are provided by cysteine 303, cysteine 305, cysteine 308, and histidine 334.

This sequence belongs to the queuine tRNA-ribosyltransferase family. In terms of assembly, homodimer. Within each dimer, one monomer is responsible for RNA recognition and catalysis, while the other monomer binds to the replacement base PreQ1. Zn(2+) is required as a cofactor.

The catalysed reaction is 7-aminomethyl-7-carbaguanine + guanosine(34) in tRNA = 7-aminomethyl-7-carbaguanosine(34) in tRNA + guanine. Its pathway is tRNA modification; tRNA-queuosine biosynthesis. Its function is as follows. Catalyzes the base-exchange of a guanine (G) residue with the queuine precursor 7-aminomethyl-7-deazaguanine (PreQ1) at position 34 (anticodon wobble position) in tRNAs with GU(N) anticodons (tRNA-Asp, -Asn, -His and -Tyr). Catalysis occurs through a double-displacement mechanism. The nucleophile active site attacks the C1' of nucleotide 34 to detach the guanine base from the RNA, forming a covalent enzyme-RNA intermediate. The proton acceptor active site deprotonates the incoming PreQ1, allowing a nucleophilic attack on the C1' of the ribose to form the product. After dissociation, two additional enzymatic reactions on the tRNA convert PreQ1 to queuine (Q), resulting in the hypermodified nucleoside queuosine (7-(((4,5-cis-dihydroxy-2-cyclopenten-1-yl)amino)methyl)-7-deazaguanosine). This chain is Queuine tRNA-ribosyltransferase, found in Prochlorococcus marinus (strain AS9601).